The chain runs to 307 residues: Elongation factor Ts (307 aa).

The tract at residues threonine 80 to valine 83 is involved in Mg(2+) ion dislocation from EF-Tu.

It belongs to the EF-Ts family.

It is found in the cytoplasm. Its function is as follows. Associates with the EF-Tu.GDP complex and induces the exchange of GDP to GTP. It remains bound to the aminoacyl-tRNA.EF-Tu.GTP complex up to the GTP hydrolysis stage on the ribosome. This Methylobacterium nodulans (strain LMG 21967 / CNCM I-2342 / ORS 2060) protein is Elongation factor Ts.